The chain runs to 509 residues: Transmembrane protein 104 homolog (509 aa).

Residues 1–19 (MPRLVNGREAAPTYSNLVG) lie on the Cytoplasmic side of the membrane. The helical transmembrane segment at 20–40 (FIFIFNLIVGTGALTLPGVFA) threads the bilayer. Topologically, residues 41-45 (RAGWM) are extracellular. The chain crosses the membrane as a helical span at residues 46–66 (LSLIVIVLLAIISYMTVTFII). Topologically, residues 67–151 (EAMACANAIR…ATLFFNEFGR (85 aa)) are cytoplasmic. Residues 152-172 (VMFYLCLIVYLYGDLSIYSAA) traverse the membrane as a helical segment. Residues 173–218 (VARSLRDVVCDQTNGTDTNNLMYWPGDFENNTSLACWKEHTISRLN) are Extracellular-facing. Residues N186, N202, and N203 are each glycosylated (N-linked (GlcNAc...) asparagine). The chain crosses the membrane as a helical span at residues 219-239 (MYRVLLIGFTLIFGPFVYFNV). At 240–248 (QKTKYLQML) the chain is on the cytoplasmic side. A helical transmembrane segment spans residues 249 to 269 (TAAFRWMAFTLMICISLKLLI). Over 270 to 277 (SRGAKGHP) the chain is Extracellular. Residues 278-298 (ATFNVYGIPSLFGACVYSFMC) traverse the membrane as a helical segment. The Cytoplasmic segment spans residues 299-320 (HHSLPSLLAPIRHKSMVSKILS). Residues 321 to 341 (IDYIIICAFYILLAMTGIFAF) form a helical membrane-spanning segment. Residues 342-361 (ERIEDLYTLDFLPYDVAYVD) lie on the Extracellular side of the membrane. A helical membrane pass occupies residues 362–382 (FWSGLLICIDYFLALFPIFTL). At 383–411 (STSFPIVAITLKNNLQSLFLDMSQYESYS) the chain is on the cytoplasmic side. A helical membrane pass occupies residues 412–432 (VILRLCFPLLAIIPPFCITYF). Residues 433–439 (TESLSSL) are Extracellular-facing. A helical membrane pass occupies residues 440-460 (VAFTGTYAGTGIQYIIPVFLV). Topologically, residues 461-487 (YFARRTCSELLGSGVVNRFKSPFKSSA) are cytoplasmic. A helical transmembrane segment spans residues 488–508 (WLVFVFIWSILCVCLVSINLF). S509 is a topological domain (extracellular).

This sequence belongs to the TMEM104 family.

The protein resides in the membrane. The polypeptide is Transmembrane protein 104 homolog (Drosophila melanogaster (Fruit fly)).